The chain runs to 366 residues: Melatonin receptor type 1A (366 aa).

The Extracellular segment spans residues 1–45; sequence MAGRLWGSPGGTPKGNGSSALLNVSQAAPGAGDGVRPRPSWLAAT. Asn-16 and Asn-23 each carry an N-linked (GlcNAc...) asparagine glycan. The chain crosses the membrane as a helical span at residues 46 to 66; it reads LASILIFTIVVDIVGNLLVVL. At 67–79 the chain is on the cytoplasmic side; that stretch reads SVYRNKKLRNAGN. A helical membrane pass occupies residues 80–100; sequence VFVVSLAVADLLVAVYPYPLA. Residues 101-118 are Extracellular-facing; it reads LASIVNNGWSLSSLHCQL. The cysteines at positions 116 and 193 are disulfide-linked. Residues 119 to 139 traverse the membrane as a helical segment; the sequence is SGFLMGLSVIGSVFSITGIAI. Residues 140–158 lie on the Cytoplasmic side of the membrane; sequence NRYCCICHSLRYGKLYSGT. Residues 159–179 traverse the membrane as a helical segment; the sequence is NSLCYVFLIWTLTLVAIVPNL. Residues 180-203 lie on the Extracellular side of the membrane; the sequence is CVGTLQYDPRIYSCTFTQSVSSAY. A helical transmembrane segment spans residues 204–224; that stretch reads TIAVVVFHFIVPMLVVVFCYL. At 225-256 the chain is on the cytoplasmic side; the sequence is RIWALVLQVRWKVKPDNKPKLKPQDFRNFVTM. A helical membrane pass occupies residues 257–277; the sequence is FVVFVLFAICWAPLNFIGLVV. Residues 278-290 are Extracellular-facing; that stretch reads ASDPASMAPRIPE. The chain crosses the membrane as a helical span at residues 291–311; the sequence is WLFVASYYMAYFNSCLNAIIY. Topologically, residues 312 to 366 are cytoplasmic; the sequence is GLLNQNFRQEYRKIIVSLCTTKMFFVDSSNHVADRIKRKPSPLIANHNLIKVDSV.

It belongs to the G-protein coupled receptor 1 family.

The protein resides in the cell membrane. Functionally, high affinity receptor for melatonin. Likely to mediate the reproductive and circadian actions of melatonin. The activity of this receptor is mediated by pertussis toxin sensitive G proteins that inhibit adenylate cyclase activity. Possibly involved in sleep induction, by melatonin activation of the potassium channel KCNMA1/BK and the dissociation of G-beta and G-gamma subunits, thereby decreasing synaptic transmission. In Ovis aries (Sheep), this protein is Melatonin receptor type 1A (MTNR1A).